We begin with the raw amino-acid sequence, 638 residues long: ATP-dependent rRNA helicase spb4 (638 aa).

Residues 14-42 (WDGVSPSLSEWVLEAVSSMGFTRMTPVQA) carry the Q motif motif. In terms of domain architecture, Helicase ATP-binding spans 45-249 (IPLFMAHKDV…RVGLRNPVKV (205 aa)). ATP is bound at residue 58–65 (AVTGSGKT). A DEAD box motif is present at residues 197–200 (DEAD). Residues 283–437 (ALKHILHSVD…PISFSESEAT (155 aa)) enclose the Helicase C-terminal domain. Basic and acidic residues-rich tracts occupy residues 534-554 (LLQE…RKAT) and 577-615 (QRRQ…EERR). The segment at 534–638 (LLQESKEGDG…KDEEEFEGFD (105 aa)) is disordered. Residues 566 to 619 (RNKKQKRREQKQRRQEKNKWEKMTEEERQKIRETEQMVESIRVKNEEERRLRRA) are a coiled coil.

It belongs to the DEAD box helicase family. DDX55/SPB4 subfamily. Component of pre-60S ribosomal complexes.

The protein localises to the nucleus. It localises to the nucleolus. The enzyme catalyses ATP + H2O = ADP + phosphate + H(+). Its function is as follows. ATP-binding RNA helicase involved in the biogenesis of 60S ribosomal subunits. Binds 90S pre-ribosomal particles and dissociates from pre-60S ribosomal particles after processing of 27SB pre-rRNA. Required for the normal formation of 18S rRNA through the processing of pre-rRNAs at sites A0, A1 and A2, and the normal formation of 25S and 5.8S rRNAs through the processing of pre-rRNAs at sites C1 and C2. The protein is ATP-dependent rRNA helicase spb4 of Aspergillus oryzae (strain ATCC 42149 / RIB 40) (Yellow koji mold).